Reading from the N-terminus, the 1087-residue chain is Fanconi-associated nuclease 1 homolog (1087 aa).

6 disordered regions span residues 1–79 (MKSN…TPIK), 104–154 (FQKA…PNNL), 169–202 (EFLL…NNIT), 459–486 (TQNS…NNNI), 816–835 (ITSD…EKEN), and 842–871 (SVKK…EEEI). Residues 41 to 79 (TTTPPKTPTQPIRFTQNNNKENDKSNNNNNNNNTITPIK) show a composition bias toward low complexity. Positions 104 to 115 (FQKASTPSSPQI) are enriched in polar residues. Low complexity-rich tracts occupy residues 118–154 (KLPQ…PNNL), 182–202 (NTTT…NNIT), and 467–485 (NNNN…NNNN). 2 coiled-coil regions span residues 419-490 (WKSK…KEYD) and 830-874 (KIEK…IIEI). Positions 848-871 (EQEEEEEEEEEGQGQEEEEEEEEI) are enriched in acidic residues. 4 residues coordinate Mn(2+): Glu-899, Asp-1023, Glu-1051, and Val-1052. The 123-residue stretch at 961–1083 (DDLLILLNQS…GCDVEVCLVK (123 aa)) folds into the VRR-NUC domain.

Belongs to the FAN1 family. It depends on Mn(2+) as a cofactor. Mg(2+) serves as cofactor.

The enzyme catalyses Hydrolytically removes 5'-nucleotides successively from the 3'-hydroxy termini of 3'-hydroxy-terminated oligonucleotides.. In terms of biological role, nuclease required for the repair of DNA interstrand cross-links (ICL). Acts as a 5'-3' exonuclease that anchors at a cut end of DNA and cleaves DNA successively at every third nucleotide, allowing to excise an ICL from one strand through flanking incisions. The chain is Fanconi-associated nuclease 1 homolog (mtmr15) from Dictyostelium discoideum (Social amoeba).